The primary structure comprises 183 residues: Thioredoxin/glutathione peroxidase BtuE (183 aa).

Residue Cys37 is part of the active site.

The protein belongs to the glutathione peroxidase family. BtuE subfamily.

The protein resides in the periplasm. The enzyme catalyses 2 glutathione + H2O2 = glutathione disulfide + 2 H2O. The catalysed reaction is a hydroperoxide + [thioredoxin]-dithiol = an alcohol + [thioredoxin]-disulfide + H2O. Functionally, non-specific peroxidase that can use thioredoxin or glutathione as a reducing agent. In vitro, utilizes preferentially thioredoxin A to decompose hydrogen peroxide as well as cumene-, tert-butyl-, and linoleic acid hydroperoxides, suggesting that it may have one or more organic hydroperoxide as its physiological substrate. This chain is Thioredoxin/glutathione peroxidase BtuE, found in Escherichia coli (strain K12).